We begin with the raw amino-acid sequence, 439 residues long: High-energy light unresponsive protein 1 (439 aa).

The Cytoplasmic portion of the chain corresponds to 1 to 67 (MPPPSSHSNI…LGLNQSIRPN (67 aa)). A helical membrane pass occupies residues 68–88 (NSLLFRIYSWLVFCLLLFTTL). Residues 89 to 114 (RKFNQVGVRPNGTRENLQEFFANPRS) lie on the Extracellular side of the membrane. A helical transmembrane segment spans residues 115 to 135 (MITLCNALIMLSGLLASLQLY). At 136-164 (TLGAKRLKPLKILCQFSLNVRTKQAERRQ) the chain is on the cytoplasmic side. A helical transmembrane segment spans residues 165–185 (FMINTFLAVFSGLLALTMAAT). Residues 186-211 (YAMSKWGYILYIVGTPNLDTETIFCV) are Extracellular-facing. A helical membrane pass occupies residues 212 to 232 (LLDSYALFVSRAAISALAILF). The Cytoplasmic portion of the chain corresponds to 233–290 (YQHCSVIRRSIKHLINEMVPAEQDECPLPESSLQKIHDCQISYQRIFNGKAVIEEYYS). The chain crosses the membrane as a helical span at residues 291–311 (FVLFYSYGVCIPIFCFLMFVG). At 312-324 (MSAQSICWSEVVS) the chain is on the extracellular side. Residues 325–345 (IVIWIVNAILVLLLFSLPAFM) traverse the membrane as a helical segment. At 346–402 (INEDGDRLVASSFRMYHETFHEERDLTVLSQMTFFTFQIHSTKLTLSACNYFYMDRS) the chain is on the cytoplasmic side. A helical transmembrane segment spans residues 403 to 423 (ILLSLFSAILTYFLILWEFDI). The Extracellular segment spans residues 424–439 (KNNQSLQNIANHTIHT).

Belongs to the insect chemoreceptor superfamily. Gustatory receptor (GR) family. In terms of tissue distribution, expressed in the AVG and PVT neurons of the tail.

It is found in the cell membrane. Photoreceptor for short wavelength (UV) light that mediates UV-light-induced avoidance behavior. Directly senses and absorbs both UV-A and UV-B light with very high efficiency. Absorption of UV-B but not UV-A light shows resistance to photobleaching. In contrast to other photoreceptors, does not use a prosthetic chromophore to capture photons and only depends on its protein conformation. Might have a role in response to white light exposure. This chain is High-energy light unresponsive protein 1, found in Caenorhabditis elegans.